Consider the following 98-residue polypeptide: C-C motif chemokine 19 (98 aa).

An N-terminal signal peptide occupies residues 1-21 (MALLLALSLLVLWTSPAPTLS). Intrachain disulfides connect C29/C55 and C30/C71.

Belongs to the intercrine beta (chemokine CC) family. Interacts with TNFAIP6 (via Link domain). In terms of tissue distribution, expressed at high levels in the lymph nodes, thymus and appendix. Intermediate levels seen in colon and trachea, while low levels found in spleen, small intestine, lung, kidney and stomach.

Its subcellular location is the secreted. Its function is as follows. May play a role not only in inflammatory and immunological responses but also in normal lymphocyte recirculation and homing. May play an important role in trafficking of T-cells in thymus, and T-cell and B-cell migration to secondary lymphoid organs. Binds to chemokine receptor CCR7. Recombinant CCL19 shows potent chemotactic activity for T-cells and B-cells but not for granulocytes and monocytes. Binds to atypical chemokine receptor ACKR4 and mediates the recruitment of beta-arrestin (ARRB1/2) to ACKR4. This chain is C-C motif chemokine 19 (CCL19), found in Homo sapiens (Human).